The chain runs to 761 residues: Elongation factor G, mitochondrial (761 aa).

A mitochondrion-targeting transit peptide spans 1-42; sequence MSVQKMMWVPRKMVGGRIPFFTCSKVFSGFSRRSFHESPLAR. In terms of domain architecture, tr-type G spans 68–349; the sequence is NKLRNIGISA…AIVDYLPNPS (282 aa). Residues 77–84, 148–152, and 202–205 contribute to the GTP site; these read AHIDSGKT, DTPGH, and NKMD.

This sequence belongs to the TRAFAC class translation factor GTPase superfamily. Classic translation factor GTPase family. EF-G/EF-2 subfamily. The precursor is processed in two steps involving mitochondrial intermediate peptidase (MIP) and mitochondrial processing peptidase (MPP).

It localises to the mitochondrion. It functions in the pathway protein biosynthesis; polypeptide chain elongation. Its function is as follows. Mitochondrial GTPase that catalyzes the GTP-dependent ribosomal translocation step during translation elongation. During this step, the ribosome changes from the pre-translocational (PRE) to the post-translocational (POST) state as the newly formed A-site-bound peptidyl-tRNA and P-site-bound deacylated tRNA move to the P and E sites, respectively. Catalyzes the coordinated movement of the two tRNA molecules, the mRNA and conformational changes in the ribosome. This Saccharomyces cerevisiae (strain ATCC 204508 / S288c) (Baker's yeast) protein is Elongation factor G, mitochondrial.